The chain runs to 904 residues: Protein translocase subunit SecA (904 aa).

Residues Gln-87, 105–109 (GEGKT), and Asp-507 contribute to the ATP site. Residues 865–887 (GEGAEAAGQQPADAGPKIGRNDP) are disordered. Over residues 868-880 (AEAAGQQPADAGP) the composition is skewed to low complexity. Residues Cys-888, Cys-890, Cys-899, and His-900 each contribute to the Zn(2+) site.

The protein belongs to the SecA family. As to quaternary structure, monomer and homodimer. Part of the essential Sec protein translocation apparatus which comprises SecA, SecYEG and auxiliary proteins SecDF-YajC and YidC. Zn(2+) is required as a cofactor.

It localises to the cell inner membrane. It is found in the cytoplasm. It catalyses the reaction ATP + H2O + cellular proteinSide 1 = ADP + phosphate + cellular proteinSide 2.. In terms of biological role, part of the Sec protein translocase complex. Interacts with the SecYEG preprotein conducting channel. Has a central role in coupling the hydrolysis of ATP to the transfer of proteins into and across the cell membrane, serving both as a receptor for the preprotein-SecB complex and as an ATP-driven molecular motor driving the stepwise translocation of polypeptide chains across the membrane. In Dechloromonas aromatica (strain RCB), this protein is Protein translocase subunit SecA.